A 213-amino-acid polypeptide reads, in one-letter code: Phosphoenolpyruvate guanylyltransferase (213 aa).

Positions 146, 161, and 164 each coordinate phosphoenolpyruvate.

It belongs to the CofC family.

It catalyses the reaction phosphoenolpyruvate + GTP + H(+) = enolpyruvoyl-2-diphospho-5'-guanosine + diphosphate. The protein operates within cofactor biosynthesis; coenzyme F420 biosynthesis. Guanylyltransferase that catalyzes the activation of phosphoenolpyruvate (PEP) as enolpyruvoyl-2-diphospho-5'-guanosine, via the condensation of PEP with GTP. It is involved in the biosynthesis of coenzyme F420, a hydride carrier cofactor. In Mycolicibacterium vanbaalenii (strain DSM 7251 / JCM 13017 / BCRC 16820 / KCTC 9966 / NRRL B-24157 / PYR-1) (Mycobacterium vanbaalenii), this protein is Phosphoenolpyruvate guanylyltransferase.